Reading from the N-terminus, the 816-residue chain is Phosphatidylinositol 4-kinase beta (816 aa).

Disordered regions lie at residues methionine 1 to leucine 30, glutamate 101 to arginine 120, and arginine 250 to serine 318. Glycine 2 is subject to N-acetylglycine. The interval glycine 2–isoleucine 68 is interaction with ACBD3. Residues threonine 10–leucine 30 show a composition bias toward low complexity. One can recognise a PIK helical domain in the interval cysteine 52–serine 242. Serine 258 is modified (phosphoserine). Residue threonine 263 is modified to Phosphothreonine. A phosphoserine mark is found at serine 266, serine 275, serine 277, serine 284, and serine 294. 2 stretches are compositionally biased toward polar residues: residues aspartate 278–lysine 297 and serine 306–serine 318. Serine 428 carries the phosphoserine modification. Position 438 is a phosphothreonine (threonine 438). Serine 511 is modified (phosphoserine). Threonine 517 and threonine 519 each carry phosphothreonine. Residues glutamate 535–threonine 801 enclose the PI3K/PI4K catalytic domain. The segment at valine 541–glycine 547 is G-loop. The tract at residues glutamine 668 to asparagine 676 is catalytic loop. Positions histidine 687–threonine 711 are activation loop.

It belongs to the PI3/PI4-kinase family. Type III PI4K subfamily. Interacts with ARF1 and ARF3 in the Golgi complex, but not with ARF4, ARF5 or ARF6. Interacts with NCS1/FREQ in a calcium-independent manner. Interacts with CALN1/CABP8 and CALN2/CABP7; in a calcium-dependent manner; this interaction competes with NCS1/FREQ binding. Interacts with ACBD3. Interacts with ARMH3, YWHAB, YWHAE, YWHAG, YWHAH, YWHAQ, YWHAZ and SFN. Interacts with GGA2 (via VHS domain); the interaction is important for PI4KB location at the Golgi apparatus membrane. Interacts with ATG9A. Mg(2+) is required as a cofactor. It depends on Mn(2+) as a cofactor.

It is found in the endomembrane system. The protein localises to the mitochondrion outer membrane. Its subcellular location is the rough endoplasmic reticulum membrane. The protein resides in the golgi apparatus. It localises to the golgi apparatus membrane. It carries out the reaction a 1,2-diacyl-sn-glycero-3-phospho-(1D-myo-inositol) + ATP = a 1,2-diacyl-sn-glycero-3-phospho-(1D-myo-inositol 4-phosphate) + ADP + H(+). With respect to regulation, inhibited by wortmannin. Increased kinase activity upon interaction with NCS1/FREQ. Phosphorylates phosphatidylinositol (PI) in the first committed step in the production of the second messenger inositol-1,4,5,-trisphosphate (PIP). May regulate Golgi disintegration/reorganization during mitosis, possibly via its phosphorylation. Involved in Golgi-to-plasma membrane trafficking. May play an important role in the inner ear development. The chain is Phosphatidylinositol 4-kinase beta (Pi4kb) from Mus musculus (Mouse).